The sequence spans 528 residues: PH domain-containing protein DDB_G0267786 (528 aa).

Residues 59–180 (SDVFSGYLVK…WIEIFKTCCR (122 aa)) form the PH domain.

In Dictyostelium discoideum (Social amoeba), this protein is PH domain-containing protein DDB_G0267786.